An 820-amino-acid chain; its full sequence is G-type lectin S-receptor-like serine/threonine-protein kinase At1g11280 (820 aa).

An N-terminal signal peptide occupies residues Met-1–Ala-28. In terms of domain architecture, Bulb-type lectin spans Ala-29–Phe-148. Topologically, residues Ala-29–Lys-434 are extracellular. 5 N-linked (GlcNAc...) asparagine glycosylation sites follow: Asn-57, Asn-92, Asn-98, Asn-241, and Asn-272. The 37-residue stretch at Pro-283 to Glu-319 folds into the EGF-like domain. 2 cysteine pairs are disulfide-bonded: Cys-287–Cys-299 and Cys-293–Cys-307. N-linked (GlcNAc...) asparagine glycans are attached at residues Asn-325, Asn-341, and Asn-384. A PAN domain is found at Cys-338–Leu-422. Cystine bridges form between Cys-377/Cys-398 and Cys-381/Cys-387. Residues Ile-435–Tyr-455 form a helical membrane-spanning segment. Topologically, residues Trp-456–Arg-820 are cytoplasmic. Positions Phe-505–Phe-792 constitute a Protein kinase domain. Residues Leu-511–Val-519 and Lys-533 contribute to the ATP site. 2 positions are modified to phosphoserine: Ser-539 and Ser-554. The caM-binding stretch occupies residues Thr-594–Val-611. The active-site Proton acceptor is the Asp-630. Ser-634 and Ser-647 each carry phosphoserine. Position 664 is a phosphothreonine (Thr-664). Ser-707, Ser-708, and Ser-808 each carry phosphoserine. Thr-815 is subject to Phosphothreonine.

Belongs to the protein kinase superfamily. Ser/Thr protein kinase family.

It localises to the cell membrane. The catalysed reaction is L-seryl-[protein] + ATP = O-phospho-L-seryl-[protein] + ADP + H(+). The enzyme catalyses L-threonyl-[protein] + ATP = O-phospho-L-threonyl-[protein] + ADP + H(+). The protein is G-type lectin S-receptor-like serine/threonine-protein kinase At1g11280 of Arabidopsis thaliana (Mouse-ear cress).